The following is a 163-amino-acid chain: NADH-quinone oxidoreductase subunit I (163 aa).

2 4Fe-4S ferredoxin-type domains span residues 54 to 84 (LRRYPNGEERCIACKLCEAVCPAMAITIESE) and 94 to 123 (TRYDIDLTKCIFCGFCEESCPVDSIVETRI). [4Fe-4S] cluster is bound by residues Cys-64, Cys-67, Cys-70, Cys-74, Cys-103, Cys-106, Cys-109, and Cys-113.

The protein belongs to the complex I 23 kDa subunit family. In terms of assembly, NDH-1 is composed of 14 different subunits. Subunits NuoA, H, J, K, L, M, N constitute the membrane sector of the complex. [4Fe-4S] cluster serves as cofactor.

It is found in the cell inner membrane. It catalyses the reaction a quinone + NADH + 5 H(+)(in) = a quinol + NAD(+) + 4 H(+)(out). Functionally, NDH-1 shuttles electrons from NADH, via FMN and iron-sulfur (Fe-S) centers, to quinones in the respiratory chain. The immediate electron acceptor for the enzyme in this species is believed to be ubiquinone. Couples the redox reaction to proton translocation (for every two electrons transferred, four hydrogen ions are translocated across the cytoplasmic membrane), and thus conserves the redox energy in a proton gradient. The chain is NADH-quinone oxidoreductase subunit I from Methylobacillus flagellatus (strain ATCC 51484 / DSM 6875 / VKM B-1610 / KT).